A 143-amino-acid chain; its full sequence is Transcriptional regulator SlyA (143 aa).

In terms of domain architecture, HTH marR-type spans Glu-2–Gln-135. The segment at residues Gln-49 to Asp-72 is a DNA-binding region (H-T-H motif).

The protein belongs to the SlyA family. In terms of assembly, homodimer.

Transcription regulator that can specifically activate or repress expression of target genes. The chain is Transcriptional regulator SlyA from Edwardsiella tarda.